The following is a 380-amino-acid chain: Cell division protein FtsZ 2 (380 aa).

GTP contacts are provided by residues 47-51, 134-136, glutamate 165, arginine 168, and aspartate 211; these read GAGNN and GTG.

The protein belongs to the FtsZ family. Homodimer. Polymerizes to form a dynamic ring structure in a strictly GTP-dependent manner. Interacts directly with several other division proteins.

Its subcellular location is the cytoplasm. Essential cell division protein that forms a contractile ring structure (Z ring) at the future cell division site. The regulation of the ring assembly controls the timing and the location of cell division. One of the functions of the FtsZ ring is to recruit other cell division proteins to the septum to produce a new cell wall between the dividing cells. Binds GTP and shows GTPase activity. This is Cell division protein FtsZ 2 from Methanocaldococcus jannaschii (strain ATCC 43067 / DSM 2661 / JAL-1 / JCM 10045 / NBRC 100440) (Methanococcus jannaschii).